The primary structure comprises 241 residues: Peroxisomal membrane protein 11C (241 aa).

Over 1-124 (MASLSGLASA…ARVLHVDSSR (124 aa)) the chain is Cytoplasmic. A helical transmembrane segment spans residues 125–149 (WWTLSTTLWALSLLLGVARSLWMLL). Topologically, residues 150-211 (KLRQRLRSPT…GVLWAGRFPP (62 aa)) are lumenal. Residues 212 to 227 (WLVGLMGTISSILSMY) traverse the membrane as a helical segment. Residues 228 to 241 (QAARAGGQAEATTP) lie on the Cytoplasmic side of the membrane.

Belongs to the peroxin-11 family. Homodimer. Heterodimer with either PEX11A or PEX11B. Interacts with FIS1.

It is found in the peroxisome membrane. Its function is as follows. Promotes membrane protrusion and elongation on the peroxisomal surface. This Homo sapiens (Human) protein is Peroxisomal membrane protein 11C (PEX11G).